The sequence spans 2540 residues: Probable JmjC domain-containing histone demethylation protein 2C (2540 aa).

Positions 278–309 (TRAQANSPRPAMNSQAAVPKQNTHQQQQQRSI) are enriched in polar residues. Positions 278-478 (TRAQANSPRP…TVSDHNSNDL (201 aa)) are disordered. 2 positions are modified to phosphoserine: Ser317 and Ser320. Positions 323-342 (DEEKMKEEKYDYISRGENPK) are enriched in basic and acidic residues. A compositionally biased stretch (basic residues) spans 343 to 353 (GKNKHLMNKRR). Basic and acidic residues predominate over residues 354-371 (KPEEDEKKLNMKRLRTDN). A phosphoserine mark is found at Ser373 and Ser376. Low complexity predominate over residues 373–382 (SDFSESSDSE). 3 stretches are compositionally biased toward basic and acidic residues: residues 383–403 (NSNKRIIDNSSEQKPENELKN), 410–427 (NGEEGKPHNNEKAGEETL), and 438–452 (QEDKKHEEAEKRKSV). Positions 464-478 (SSEQSTVSDHNSNDL) are enriched in polar residues. Phosphoserine occurs at positions 475 and 501. Phosphothreonine is present on Thr505. Ser601, Ser617, Ser638, Ser639, Ser641, Ser652, and Ser943 each carry phosphoserine. The disordered stretch occupies residues 631–656 (VDTHKIKSSPSPEVVKPKITHSPDSV). Disordered regions lie at residues 1242 to 1263 (GKVQESQKPPTLIPEPKDSQAN) and 1614 to 1692 (NRRK…NSNT). Residues 1643 to 1652 (KRQPKPTYKK) show a composition bias toward basic residues. Basic and acidic residues predominate over residues 1653–1669 (KQNDLQKRKGEIEEDLK). The segment at 1846–1871 (CDACEATLFNIHWVCQKCGFVVCLDC) adopts a C6-type zinc-finger fold. Positions 1971–1991 (PESQQQNTPPKSEKNGGSSPE) are enriched in polar residues. The disordered stretch occupies residues 1971–2064 (PESQQQNTPP…LVSQNNEQGS (94 aa)). Phosphoserine is present on Ser1989. The segment covering 2016 to 2043 (AEQKAREEKKENKELTLENQIKEEREQD) has biased composition (basic and acidic residues). Polar residues predominate over residues 2045–2064 (SESPNGRTSPLVSQNNEQGS). The short motif at 2066 to 2070 (LRDLL) is the LXXLL motif element. Residues Lys2132 and Lys2136 each participate in a glycyl lysine isopeptide (Lys-Gly) (interchain with G-Cter in SUMO2) cross-link. The 225-residue stretch at 2274–2498 (MPARYEDLLK…ESFHLTQELR (225 aa)) folds into the JmjC domain. Fe cation is bound by residues His2336, Glu2338, and His2466.

This sequence belongs to the JHDM2 histone demethylase family. Interacts specifically with the ligand-binding domain of the thyroid receptor (TR). Requires the presence of thyroid hormone for its interaction. Fe(2+) serves as cofactor.

It is found in the nucleus. Functionally, probable histone demethylase that specifically demethylates 'Lys-9' of histone H3, thereby playing a central role in histone code. Demethylation of Lys residue generates formaldehyde and succinate. May be involved in hormone-dependent transcriptional activation, by participating in recruitment to androgen-receptor target genes. In Homo sapiens (Human), this protein is Probable JmjC domain-containing histone demethylation protein 2C (JMJD1C).